A 164-amino-acid chain; its full sequence is Succinate dehydrogenase assembly factor 2, mitochondrial (164 aa).

Belongs to the SDHAF2 family. As to quaternary structure, interacts with the flavoprotein subunit within the SDH catalytic dimer.

The protein localises to the mitochondrion matrix. In terms of biological role, plays an essential role in the assembly of succinate dehydrogenase (SDH), an enzyme complex (also referred to as respiratory complex II) that is a component of both the tricarboxylic acid (TCA) cycle and the mitochondrial electron transport chain, and which couples the oxidation of succinate to fumarate with the reduction of ubiquinone (coenzyme Q) to ubiquinol. Required for flavinylation (covalent attachment of FAD) of the flavoprotein subunit of the SDH catalytic dimer. The polypeptide is Succinate dehydrogenase assembly factor 2, mitochondrial (Lodderomyces elongisporus (strain ATCC 11503 / CBS 2605 / JCM 1781 / NBRC 1676 / NRRL YB-4239) (Yeast)).